We begin with the raw amino-acid sequence, 507 residues long: Maturase K (507 aa).

This sequence belongs to the intron maturase 2 family. MatK subfamily.

The protein resides in the plastid. Its subcellular location is the chloroplast. In terms of biological role, usually encoded in the trnK tRNA gene intron. Probably assists in splicing its own and other chloroplast group II introns. In Robinia pseudoacacia (Black locust), this protein is Maturase K.